Reading from the N-terminus, the 325-residue chain is MIARIWSGESPLWRLLLPLSWLYGLVSGAIRLSYKLGFKRAWRAPVPVVVVGNLTAGGNGKTPVVIWLVEKLQQRGVRVGVVSRGYGGKAAAYPLLLTPETTTAEAGDEPVLIYQRTGAPVAVAPERAAAVKAILAAHNVQIIITDDGLQHYRLARDIEIVVIDGVRRFGNGWWLPAGPMRERASRLKTVDAAIVNGGVARAGEIPMQLAPGLAVNLRTGARCDVAQLSNIVAMAGIGHPPRFFATLEACGAHPQKCVPLADHQTLAPADVQALVGEGQTLVMTEKDAVKCRAFAEDNWWFLPVDARLSGEQPDKLLEHITSLVR.

55 to 62 (TAGGNGKT) provides a ligand contact to ATP.

This sequence belongs to the LpxK family.

It carries out the reaction a lipid A disaccharide + ATP = a lipid IVA + ADP + H(+). It participates in glycolipid biosynthesis; lipid IV(A) biosynthesis; lipid IV(A) from (3R)-3-hydroxytetradecanoyl-[acyl-carrier-protein] and UDP-N-acetyl-alpha-D-glucosamine: step 6/6. Functionally, transfers the gamma-phosphate of ATP to the 4'-position of a tetraacyldisaccharide 1-phosphate intermediate (termed DS-1-P) to form tetraacyldisaccharide 1,4'-bis-phosphate (lipid IVA). The protein is Tetraacyldisaccharide 4'-kinase of Salmonella paratyphi C (strain RKS4594).